Here is a 281-residue protein sequence, read N- to C-terminus: Large ribosomal subunit protein uL2 (281 aa).

A disordered region spans residues 222–281 (TVRGSAMNPNDHPHGGGEGRQPIGRKSPMTPWGKRALGVKTRATKKASNQFIIRRRKETK).

The protein belongs to the universal ribosomal protein uL2 family. Part of the 50S ribosomal subunit. Forms a bridge to the 30S subunit in the 70S ribosome.

Functionally, one of the primary rRNA binding proteins. Required for association of the 30S and 50S subunits to form the 70S ribosome, for tRNA binding and peptide bond formation. It has been suggested to have peptidyltransferase activity; this is somewhat controversial. Makes several contacts with the 16S rRNA in the 70S ribosome. This chain is Large ribosomal subunit protein uL2, found in Metamycoplasma hominis (strain ATCC 23114 / DSM 25592 / NBRC 14850 / NCTC 10111 / PG21) (Mycoplasma hominis).